A 1047-amino-acid polypeptide reads, in one-letter code: MALPSLLLVVAALAGGVRPPGARNLTLAVVLPEHNLSYAWAWPRVGPAVALAVEALGRALPVDLRFVSSELDGACSEYLAPLRAVDLKLYHDPDLLLGPGCVYPAASVARFASHWHLPLLTAGAVASGFAAKNEHYRTLVRTGPSAPKLGEFVVTLHGHFNWTARAALLYLDARTDDRPHYFTIEGVFEALQGSNLSVQHQVYTREPGGPEQATHFIRANGRIVYICGPLEMLHEILLQAQRENLTNGDYVFFYLDVFGESLRAGPTRATGRPWQDNRTQEQAQALREAFQTVLVITYREPPNPEYQEFQNRLLIRAREDFGVELAPSLMNLIAGCFYDGILLYAQVLNETIQEGGTREDGLRIVEKMQGRRYHGVTGLVVMDKNNDRETDFVLWAMGDLESGDFQPAAHYSGAEKQIWWTGRPIPWVKGAPPLDNPPCAFDLDDPSCDKTPLSTLAIVALGTGITFIMFGVSSFLIFRKLMLEKELASMLWRIRWEELQFGNSDRYHKGAGSRLTLSLRGSSYGSLMTAHGKYQIFANTGHFKGNVVAIKHVNKKRIELTRQVLFELKHMRDVQFNHLTRFIGACIDPPNICIVTEYCPRGSLQDILENDSINLDWMFRYSLINDLVKGMAFLHNSIISSHGSLKSSNCVVDSRFVLKITDYGLASFRSTAEPDDSHALYAKKLWTAPELLSGNPLPTTGMQKADVYSFAIILQEIALRSGPFYLEGLDLSPKEIVQKVRNGQRPYFRPSIDRTQLNEELVLLMERCWAQDPTERPDFGQIKGFIRRFNKEGGTSILDNLLLRMEQYANNLEKLVEERTQAYLEEKRKAEALLYQILPHSVAEQLKRGETVQAEAFDSVTIYFSDIVGFTALSAESTPMQVVTLLNDLYTCFDAIIDNFDVYKVETIGDAYMVVSGLPGRNGQRHAPEIARMALALLDAVSSFRIRHRPHDQLRLRIGVHTGPVCAGVVGLKMPRYCLFGDTVNTASRMESNGQALKIHVSSTTKDALDELGCFQLELRGDVEMKGKGKMRTYWLLGERKGPPGLL.

An N-terminal signal peptide occupies residues 1–16 (MALPSLLLVVAALAGG). Over 17-458 (VRPPGARNLT…DKTPLSTLAI (442 aa)) the chain is Extracellular. N-linked (GlcNAc...) asparagine glycosylation is found at N24 and N35. A disulfide bridge links C75 with C101. N161, N195, N244, N277, and N349 each carry an N-linked (GlcNAc...) asparagine glycan. Residues 459–478 (VALGTGITFIMFGVSSFLIF) form a helical membrane-spanning segment. Residues 479 to 1047 (RKLMLEKELA…GERKGPPGLL (569 aa)) lie on the Cytoplasmic side of the membrane. Residue S513 is modified to Phosphoserine. In terms of domain architecture, Protein kinase spans 513 to 786 (SRLTLSLRGS…PDFGQIKGFI (274 aa)). The residue at position 516 (T516) is a Phosphothreonine. S518, S522, S523, and S526 each carry phosphoserine. T529 carries the phosphothreonine modification. One can recognise a Guanylate cyclase domain in the interval 861–991 (TIYFSDIVGF…DTVNTASRME (131 aa)).

It belongs to the adenylyl cyclase class-4/guanylyl cyclase family. Post-translationally, phosphorylated. Phosphorylation of the protein kinase-like domain is required for full activation by CNP. In terms of processing, glycosylated.

It localises to the cell membrane. The catalysed reaction is GTP = 3',5'-cyclic GMP + diphosphate. Functionally, receptor for the C-type natriuretic peptide NPPC/CNP hormone. Has guanylate cyclase activity upon binding of its ligand. May play a role in the regulation of skeletal growth. This chain is Atrial natriuretic peptide receptor 2 (Npr2), found in Rattus norvegicus (Rat).